Here is an 87-residue protein sequence, read N- to C-terminus: Small ribosomal subunit protein uS15c (87 aa).

It belongs to the universal ribosomal protein uS15 family. In terms of assembly, part of the 30S ribosomal subunit.

Its subcellular location is the plastid. The protein localises to the chloroplast. The chain is Small ribosomal subunit protein uS15c (rps15) from Solanum tuberosum (Potato).